The following is a 436-amino-acid chain: Serine hydroxymethyltransferase (436 aa).

Residues leucine 133 and 137 to 139 each bind (6S)-5,6,7,8-tetrahydrofolate; that span reads GHL. Lysine 242 bears the N6-(pyridoxal phosphate)lysine mark. 366-368 contacts (6S)-5,6,7,8-tetrahydrofolate; it reads SPF.

The protein belongs to the SHMT family. Homodimer. Requires pyridoxal 5'-phosphate as cofactor.

It is found in the cytoplasm. The enzyme catalyses (6R)-5,10-methylene-5,6,7,8-tetrahydrofolate + glycine + H2O = (6S)-5,6,7,8-tetrahydrofolate + L-serine. It functions in the pathway one-carbon metabolism; tetrahydrofolate interconversion. The protein operates within amino-acid biosynthesis; glycine biosynthesis; glycine from L-serine: step 1/1. In terms of biological role, catalyzes the reversible interconversion of serine and glycine with tetrahydrofolate (THF) serving as the one-carbon carrier. This reaction serves as the major source of one-carbon groups required for the biosynthesis of purines, thymidylate, methionine, and other important biomolecules. Also exhibits THF-independent aldolase activity toward beta-hydroxyamino acids, producing glycine and aldehydes, via a retro-aldol mechanism. The chain is Serine hydroxymethyltransferase from Novosphingobium aromaticivorans (strain ATCC 700278 / DSM 12444 / CCUG 56034 / CIP 105152 / NBRC 16084 / F199).